Here is a 213-residue protein sequence, read N- to C-terminus: Thymidylate kinase (213 aa).

10 to 17 (GLEGAGKT) is a binding site for ATP.

The protein belongs to the thymidylate kinase family.

The catalysed reaction is dTMP + ATP = dTDP + ADP. Functionally, phosphorylation of dTMP to form dTDP in both de novo and salvage pathways of dTTP synthesis. This chain is Thymidylate kinase, found in Klebsiella pneumoniae (strain 342).